We begin with the raw amino-acid sequence, 292 residues long: uncharacterized protein (292 aa).

Residues threonine 43 and tyrosine 105 each act as charge relay system in the active site. The active-site Proton donor is the tyrosine 131. Lysine 159 (schiff-base intermediate with substrate) is an active-site residue.

Belongs to the DapA family. Homotetramer.

Its subcellular location is the cytoplasm. This is an uncharacterized protein from Thermococcus kodakarensis (strain ATCC BAA-918 / JCM 12380 / KOD1) (Pyrococcus kodakaraensis (strain KOD1)).